Consider the following 149-residue polypeptide: Large ribosomal subunit protein bL9 (149 aa).

This sequence belongs to the bacterial ribosomal protein bL9 family.

Binds to the 23S rRNA. The protein is Large ribosomal subunit protein bL9 of Laribacter hongkongensis (strain HLHK9).